A 66-amino-acid polypeptide reads, in one-letter code: Jindongenin-1a (66 aa).

Positions 1 to 22 (MFTLKKPLLLLFFLGTVSLSLC) are cleaved as a signal peptide. The propeptide occupies 23–40 (EQERAADDDEGEVIEEEV). Cys60 and Cys66 are disulfide-bonded.

In terms of tissue distribution, expressed by the skin glands.

The protein resides in the secreted. Its function is as follows. Displays broad-spectrum antibacterial activity against a range of Gram-positive and Gram-negative bacteria. Also displays antifungal activity against C.albicans ATCC 2002. Has low hemolytic activity, low cytotoxicity and low antioxidant activity. The protein is Jindongenin-1a of Amolops jingdongensis (Chinese torrent frog).